We begin with the raw amino-acid sequence, 398 residues long: Bifunctional enzyme IspD/IspF (398 aa).

The tract at residues 1–237 (MSISIAAIIL…QKKMQMFPDI (237 aa)) is 2-C-methyl-D-erythritol 4-phosphate cytidylyltransferase. The segment at 238 to 398 (RVGNGYDVHS…SVLYPGEIPQ (161 aa)) is 2-C-methyl-D-erythritol 2,4-cyclodiphosphate synthase. 2 residues coordinate a divalent metal cation: Asp244 and His246. Residues 244 to 246 (DVH) and 270 to 271 (HS) contribute to the 4-CDP-2-C-methyl-D-erythritol 2-phosphate site. His278 is a binding site for a divalent metal cation. Residues 292 to 294 (DIG), 368 to 371 (TTNE), Phe375, and Arg378 contribute to the 4-CDP-2-C-methyl-D-erythritol 2-phosphate site.

It in the N-terminal section; belongs to the IspD/TarI cytidylyltransferase family. IspD subfamily. The protein in the C-terminal section; belongs to the IspF family. The cofactor is a divalent metal cation.

It carries out the reaction 2-C-methyl-D-erythritol 4-phosphate + CTP + H(+) = 4-CDP-2-C-methyl-D-erythritol + diphosphate. It catalyses the reaction 4-CDP-2-C-methyl-D-erythritol 2-phosphate = 2-C-methyl-D-erythritol 2,4-cyclic diphosphate + CMP. It functions in the pathway isoprenoid biosynthesis; isopentenyl diphosphate biosynthesis via DXP pathway; isopentenyl diphosphate from 1-deoxy-D-xylulose 5-phosphate: step 2/6. Its pathway is isoprenoid biosynthesis; isopentenyl diphosphate biosynthesis via DXP pathway; isopentenyl diphosphate from 1-deoxy-D-xylulose 5-phosphate: step 4/6. Bifunctional enzyme that catalyzes the formation of 4-diphosphocytidyl-2-C-methyl-D-erythritol from CTP and 2-C-methyl-D-erythritol 4-phosphate (MEP) (IspD), and catalyzes the conversion of 4-diphosphocytidyl-2-C-methyl-D-erythritol 2-phosphate (CDP-ME2P) to 2-C-methyl-D-erythritol 2,4-cyclodiphosphate (ME-CPP) with a corresponding release of cytidine 5-monophosphate (CMP) (IspF). This Bartonella tribocorum (strain CIP 105476 / IBS 506) protein is Bifunctional enzyme IspD/IspF.